We begin with the raw amino-acid sequence, 317 residues long: Putative 12-oxophytodienoate reductase 10 (317 aa).

26–28 provides a ligand contact to FMN; it reads PVG. Substrate is bound at residue 117–120; it reads HGAN. The active-site Proton donor is the Y122. R169 contributes to the FMN binding site. Position 209 (R209) interacts with substrate. FMN contacts are provided by residues G244 and 265–266; that span reads GR.

The protein belongs to the NADH:flavin oxidoreductase/NADH oxidase family. It depends on FMN as a cofactor.

Functionally, putative oxophytodienoate reductase that may be involved in the biosynthesis or metabolism of oxylipin signaling molecules. The chain is Putative 12-oxophytodienoate reductase 10 (OPR10) from Oryza sativa subsp. japonica (Rice).